The primary structure comprises 180 residues: Virion protein US10 homolog (180 aa).

The protein belongs to the herpesviridae US10 family. Phosphorylated.

It is found in the virion tegument. The protein localises to the host nucleus matrix. The sequence is that of Virion protein US10 homolog (64) from Varicella-zoster virus (strain Dumas) (HHV-3).